A 615-amino-acid polypeptide reads, in one-letter code: Prickle planar cell polarity protein 3 (615 aa).

Residues 1–12 (MFARGSRRRRSG) show a composition bias toward basic residues. A disordered region spans residues 1–26 (MFARGSRRRRSGRAPPEAEDPDRGQP). In terms of domain architecture, PET spans 74–182 (SDFQRHSISD…IVRIFPVTIT (109 aa)). LIM zinc-binding domains are found at residues 184-249 (AICE…CLRP), 250-309 (RCQA…RHAE), and 310-373 (YCDG…SEPT). Disordered regions lie at residues 396–567 (ASFS…LGER) and 587–615 (TFNS…CIVA). The segment covering 405 to 415 (SETTTKGTSTE) has biased composition (polar residues). A phosphoserine mark is found at S475 and S491. Basic residues predominate over residues 508-531 (PSRRRHHHHNHHHHHNRHPSRRRH). The span at 537–555 (GSGSDSESCSSSPSSSSSE) shows a compositional bias: low complexity. Over residues 606–615 (QARDKNCIVA) the composition is skewed to basic and acidic residues.

Belongs to the prickle / espinas / testin family. As to quaternary structure, interacts with VANGL2 via its C-terminus. The VANGL2-dependent membrane recruitment of PRICKLE3 is a prerequisite for its polarization. Interacts with WTIP. WTIP is involved in the recruitment of PRICKLE3 to the basal body. Interacts with MT-ATP8, a component of the mitochondrial complex V. In terms of tissue distribution, widely expressed.

Its subcellular location is the cytoplasm. The protein localises to the cell membrane. It is found in the mitochondrion. In terms of biological role, involved in the planar cell polarity (PCP) pathway that is essential for the polarization of epithelial cells during morphogenetic processes, including gastrulation and neurulation. PCP is maintained by two molecular modules, the global and the core modules, PRICKLE3 being part of the core module. Distinct complexes of the core module segregate to opposite sides of the cell, where they interact with the opposite complex in the neighboring cell at or near the adherents junctions. Involved in the organization of the basal body. Involved in cilia growth and positioning. Required for proper assembly, stability, and function of mitochondrial membrane ATP synthase (mitochondrial complex V). The sequence is that of Prickle planar cell polarity protein 3 from Homo sapiens (Human).